Consider the following 171-residue polypeptide: Group 1 truncated hemoglobin LI410 (171 aa).

A chloroplast-targeting transit peptide spans M1–A23. Heme contacts are provided by Y63 and H111.

The protein belongs to the truncated hemoglobin family. Group I subfamily. Heme serves as cofactor.

It is found in the plastid. It localises to the chloroplast. The chain is Group 1 truncated hemoglobin LI410 (LI410) from Chlamydomonas moewusii (Chlamydomonas eugametos).